The sequence spans 148 residues: UPF0260 protein ECA2365 (148 aa).

Belongs to the UPF0260 family.

The protein is UPF0260 protein ECA2365 of Pectobacterium atrosepticum (strain SCRI 1043 / ATCC BAA-672) (Erwinia carotovora subsp. atroseptica).